Here is a 150-residue protein sequence, read N- to C-terminus: Large ribosomal subunit protein bL9 (150 aa).

The protein belongs to the bacterial ribosomal protein bL9 family.

Its function is as follows. Binds to the 23S rRNA. The protein is Large ribosomal subunit protein bL9 of Pseudarthrobacter chlorophenolicus (strain ATCC 700700 / DSM 12829 / CIP 107037 / JCM 12360 / KCTC 9906 / NCIMB 13794 / A6) (Arthrobacter chlorophenolicus).